We begin with the raw amino-acid sequence, 360 residues long: MSIRSNFVRLLKKQVNIIKLQKKCSHSVAVIGAPFSKGQKRRGVEHGPAAIRSAGLIDRLSNLGCNVCDFGDLHFSQVPNDEQYNSIVKHPRTVGLACKVLAKEVGKAVGAGHTCVTLGGDHSLAFGSITGHAQQCPDLCVIWVDAHADINTPLTTPSGNLHGQPVSFLLRELQDKIPPIPGFSWAKPCLSKSDIVYIGLRDLDPAEQFILKNYNISYYSMRHIDCMGIRKVMEKTFDQLLGRRDRPIHLSFDIDAFDPALAPATGTPVIGGLTYREGVYITEEIHNTGMLSALDLVEVNPVLATTSEEVKATANLAVDVIASCFGQTREGAHTRADTIIDVLPTPSTSYESDNEEQVRI.

Positions 122, 145, 147, and 149 each coordinate Mn(2+). Substrate-binding positions include histidine 147 to asparagine 151, serine 158 to asparagine 160, and aspartate 204. 2 residues coordinate Mn(2+): aspartate 253 and aspartate 255. Substrate-binding residues include threonine 267 and glutamate 298.

The protein belongs to the arginase family. In terms of assembly, homotrimer. Mn(2+) serves as cofactor. As to expression, expressed at differing tadpole stages in tail, intestine, hindlimb and trunk region. Strongest in tadpole tail.

The enzyme catalyses L-arginine + H2O = urea + L-ornithine. Its pathway is nitrogen metabolism; urea cycle; L-ornithine and urea from L-arginine: step 1/1. In terms of biological role, as well as its role in the urea cycle, may be involved in tissue remodeling. This is Arginase, non-hepatic 3 (arg2-c) from Xenopus laevis (African clawed frog).